The following is a 166-amino-acid chain: Spiderine-1a (166 aa).

Residues 1–18 form the signal peptide; sequence MKFALVLLGVCAFYLVNA. Positions 19 to 58 are excised as a propeptide; the sequence is TGDLETELEASELQELQEALDLIGETPLESLEAEELEEAR. A linear cationic cytotoxin domain region spans residues 59-99; the sequence is KFKWGKLFSTAKKLYKKGKKLSKNKNFKKALKFGKQLAKNL. In terms of domain architecture, Oxytoxin-type inhibitor cystine knot (ICK) spans 113-166; it reads NNKCWAIGTTCSDDCDCCPEHHCHCPAGKWLPGLFRCTCQVTESDKVNKCPPAE. Cystine bridges form between C116–C130, C123–C135, C127–C162, C129–C151, and C137–C149.

The protein belongs to the spiderine family. Cationic/spiderine subfamily. Expressed by the venom gland.

Its subcellular location is the secreted. Its function is as follows. Has antimicrobial, insecticidal, cytolytic and cytotoxic activity. Active against E.coli DH5alpha, E.faecalis VKM B 871, B.subtilis VKM B 501, A.globiformis VKM Ac 1112, P.aeruginosa PAO1 and S.aureus 209P in submicromolar or low micromolar ranges. Lyses human erythrocytes. Kills HeLA and A549 cells. The chain is Spiderine-1a from Oxyopes takobius (Lynx spider).